A 284-amino-acid polypeptide reads, in one-letter code: Lipoyl synthase (284 aa).

[4Fe-4S] cluster is bound by residues Cys-34, Cys-39, Cys-45, Cys-60, Cys-64, Cys-67, and Ser-272. In terms of domain architecture, Radical SAM core spans 46 to 261 (FARRTATFMI…EEIGYKLGFK (216 aa)).

Belongs to the radical SAM superfamily. Lipoyl synthase family. [4Fe-4S] cluster is required as a cofactor.

The protein resides in the cytoplasm. The catalysed reaction is [[Fe-S] cluster scaffold protein carrying a second [4Fe-4S](2+) cluster] + N(6)-octanoyl-L-lysyl-[protein] + 2 oxidized [2Fe-2S]-[ferredoxin] + 2 S-adenosyl-L-methionine + 4 H(+) = [[Fe-S] cluster scaffold protein] + N(6)-[(R)-dihydrolipoyl]-L-lysyl-[protein] + 4 Fe(3+) + 2 hydrogen sulfide + 2 5'-deoxyadenosine + 2 L-methionine + 2 reduced [2Fe-2S]-[ferredoxin]. Its pathway is protein modification; protein lipoylation via endogenous pathway; protein N(6)-(lipoyl)lysine from octanoyl-[acyl-carrier-protein]: step 2/2. Functionally, catalyzes the radical-mediated insertion of two sulfur atoms into the C-6 and C-8 positions of the octanoyl moiety bound to the lipoyl domains of lipoate-dependent enzymes, thereby converting the octanoylated domains into lipoylated derivatives. The polypeptide is Lipoyl synthase (Caldanaerobacter subterraneus subsp. tengcongensis (strain DSM 15242 / JCM 11007 / NBRC 100824 / MB4) (Thermoanaerobacter tengcongensis)).